A 575-amino-acid chain; its full sequence is Aspartate--tRNA ligase (575 aa).

Glu-169 is a binding site for L-aspartate. The tract at residues 193–196 (QLFK) is aspartate. An L-aspartate-binding site is contributed by Arg-215. ATP contacts are provided by residues 215–217 (RDE) and Gln-224. His-438 serves as a coordination point for L-aspartate. Glu-472 lines the ATP pocket. Arg-479 serves as a coordination point for L-aspartate. Residue 524–527 (GLDR) coordinates ATP.

This sequence belongs to the class-II aminoacyl-tRNA synthetase family. Type 1 subfamily. In terms of assembly, homodimer.

The protein resides in the cytoplasm. The catalysed reaction is tRNA(Asp) + L-aspartate + ATP = L-aspartyl-tRNA(Asp) + AMP + diphosphate. Its function is as follows. Catalyzes the attachment of L-aspartate to tRNA(Asp) in a two-step reaction: L-aspartate is first activated by ATP to form Asp-AMP and then transferred to the acceptor end of tRNA(Asp). The sequence is that of Aspartate--tRNA ligase from Mycoplasma capricolum subsp. capricolum (strain California kid / ATCC 27343 / NCTC 10154).